Consider the following 179-residue polypeptide: Large ribosomal subunit protein uL6 (179 aa).

This sequence belongs to the universal ribosomal protein uL6 family. Part of the 50S ribosomal subunit.

In terms of biological role, this protein binds to the 23S rRNA, and is important in its secondary structure. It is located near the subunit interface in the base of the L7/L12 stalk, and near the tRNA binding site of the peptidyltransferase center. This is Large ribosomal subunit protein uL6 from Bifidobacterium animalis subsp. lactis (strain AD011).